The sequence spans 69 residues: Sec-independent protein translocase protein TatA (69 aa).

A helical transmembrane segment spans residues 1–21 (MFGLGGQELVLILLIILLLFG). Residues 48-69 (EELNKAVDDTPEKEKKSSSEKS) form a disordered region.

Belongs to the TatA/E family. In terms of assembly, forms a complex with TatC.

The protein localises to the cell inner membrane. Functionally, part of the twin-arginine translocation (Tat) system that transports large folded proteins containing a characteristic twin-arginine motif in their signal peptide across membranes. TatA could form the protein-conducting channel of the Tat system. The sequence is that of Sec-independent protein translocase protein TatA from Chlorobium phaeobacteroides (strain BS1).